The primary structure comprises 117 residues: Immunoglobulin heavy variable 7-4-1 (117 aa).

The first 19 residues, 1–19 (MDWTWRILFLVAAATGAHS), serve as a signal peptide directing secretion. The framework-1 stretch occupies residues 20-44 (QVQLVQSGSELKKPGASVKVSCKAS). In terms of domain architecture, Ig-like spans 20–117 (QVQLVQSGSE…EDTAVYYCAR (98 aa)). Cysteines 41 and 115 form a disulfide. A complementarity-determining-1 region spans residues 45–52 (GYTFTSYA). The framework-2 stretch occupies residues 53 to 69 (MNWVRQAPGQGLEWMGW). Residues 70–77 (INTNTGNP) are complementarity-determining-2. Positions 78–115 (TYAQGFTGRFVFSLDTSVSTAYLQICSLKAEDTAVYYC) are framework-3. The segment at 116-117 (AR) is complementarity-determining-3.

As to quaternary structure, immunoglobulins are composed of two identical heavy chains and two identical light chains; disulfide-linked.

It localises to the secreted. It is found in the cell membrane. Its function is as follows. V region of the variable domain of immunoglobulin heavy chains that participates in the antigen recognition. Immunoglobulins, also known as antibodies, are membrane-bound or secreted glycoproteins produced by B lymphocytes. In the recognition phase of humoral immunity, the membrane-bound immunoglobulins serve as receptors which, upon binding of a specific antigen, trigger the clonal expansion and differentiation of B lymphocytes into immunoglobulins-secreting plasma cells. Secreted immunoglobulins mediate the effector phase of humoral immunity, which results in the elimination of bound antigens. The antigen binding site is formed by the variable domain of one heavy chain, together with that of its associated light chain. Thus, each immunoglobulin has two antigen binding sites with remarkable affinity for a particular antigen. The variable domains are assembled by a process called V-(D)-J rearrangement and can then be subjected to somatic hypermutations which, after exposure to antigen and selection, allow affinity maturation for a particular antigen. This Homo sapiens (Human) protein is Immunoglobulin heavy variable 7-4-1.